Consider the following 301-residue polypeptide: ADP,ATP carrier protein 1 (301 aa).

Solcar repeat units lie at residues 8–100 (YGFA…YKQV), 113–203 (RYFL…AKGM), and 210–299 (TSIF…VKAL). The next 5 helical transmembrane spans lie at 10–39 (FAKDFLAGGISAAVSKTAVAPIERVKLLLQ), 77–101 (LANVIRYFPTQALNFAFKDVYKQVF), 112–132 (WRYFLGNLGSGGAAGATSLCF), 181–201 (VSVQGIIIYRAAYFGCFDTAK), and 213–233 (FVSWAIAQVVTTASGIISYPF). ADP-binding residues include Arg-82 and Lys-94. Position 237 (Arg-237) interacts with ADP. The segment at 237–242 (RRRMMM) is important for transport activity. Residues 237–242 (RRRMMM) carry the Nucleotide carrier signature motif motif. Residues 276–293 (AFSNVLRGTGGALVLVFY) form a helical membrane-spanning segment.

It belongs to the mitochondrial carrier (TC 2.A.29) family. In terms of assembly, monomer.

It localises to the mitochondrion inner membrane. The catalysed reaction is ADP(in) + ATP(out) = ADP(out) + ATP(in). With respect to regulation, the matrix-open state (m-state) is inhibited by the membrane-permeable bongkrekic acid (BKA). The cytoplasmic-open state (c-state) is inhibited by the membrane-impermeable toxic inhibitor carboxyatractyloside (CATR). ADP:ATP antiporter that mediates import of ADP into the mitochondrial matrix for ATP synthesis, and export of ATP out to fuel the cell. Cycles between the cytoplasmic-open state (c-state) and the matrix-open state (m-state): operates by the alternating access mechanism with a single substrate-binding site intermittently exposed to either the cytosolic (c-state) or matrix (m-state) side of the inner mitochondrial membrane. The sequence is that of ADP,ATP carrier protein 1 from Anopheles gambiae (African malaria mosquito).